A 308-amino-acid polypeptide reads, in one-letter code: Cytochrome b (308 aa).

Transmembrane regions (helical) follow at residues 1-21 (FGSL…LLAT), 45-66 (WLIR…YLHI), 81-101 (WNTG…GYVL), and 146-166 (FFAL…VHLT). His-51 and His-65 together coordinate heme b. Heme b contacts are provided by His-150 and His-164. His-169 lines the a ubiquinone pocket. The next 3 helical transmembrane spans lie at 194–214 (MKDI…ALFS), 256–276 (LGGV…PLLH), and 288–308 (LSQI…WVGS).

It belongs to the cytochrome b family. As to quaternary structure, the cytochrome bc1 complex contains 11 subunits: 3 respiratory subunits (MT-CYB, CYC1 and UQCRFS1), 2 core proteins (UQCRC1 and UQCRC2) and 6 low-molecular weight proteins (UQCRH/QCR6, UQCRB/QCR7, UQCRQ/QCR8, UQCR10/QCR9, UQCR11/QCR10 and a cleavage product of UQCRFS1). This cytochrome bc1 complex then forms a dimer. It depends on heme b as a cofactor.

It is found in the mitochondrion inner membrane. Functionally, component of the ubiquinol-cytochrome c reductase complex (complex III or cytochrome b-c1 complex) that is part of the mitochondrial respiratory chain. The b-c1 complex mediates electron transfer from ubiquinol to cytochrome c. Contributes to the generation of a proton gradient across the mitochondrial membrane that is then used for ATP synthesis. The chain is Cytochrome b (MT-CYB) from Amblyornis macgregoriae (Macgregor's bowerbird).